A 396-amino-acid polypeptide reads, in one-letter code: Elongation factor Tu (396 aa).

Residues lysine 10–glutamate 206 form the tr-type G domain. The segment at glycine 19 to threonine 26 is G1. Glycine 19–threonine 26 lines the GTP pocket. Position 26 (threonine 26) interacts with Mg(2+). The tract at residues glycine 60–serine 64 is G2. Positions aspartate 81–glycine 84 are G3. GTP contacts are provided by residues aspartate 81–histidine 85 and asparagine 136–aspartate 139. A G4 region spans residues asparagine 136–aspartate 139. The tract at residues serine 174–leucine 176 is G5.

This sequence belongs to the TRAFAC class translation factor GTPase superfamily. Classic translation factor GTPase family. EF-Tu/EF-1A subfamily. As to quaternary structure, monomer.

The protein resides in the cytoplasm. It carries out the reaction GTP + H2O = GDP + phosphate + H(+). In terms of biological role, GTP hydrolase that promotes the GTP-dependent binding of aminoacyl-tRNA to the A-site of ribosomes during protein biosynthesis. This Bradyrhizobium sp. (strain BTAi1 / ATCC BAA-1182) protein is Elongation factor Tu.